We begin with the raw amino-acid sequence, 223 residues long: Probable GTP-binding protein EngB (223 aa).

The region spanning 49 to 223 (MGVEIAFAGR…LRAALAGLTD (175 aa)) is the EngB-type G domain. GTP-binding positions include 57-64 (GRSNVGKS), 84-88 (GRTKQ), 102-105 (DMPG), 169-172 (TKAD), and 203-205 (TSS). The Mg(2+) site is built by Ser64 and Thr86.

It belongs to the TRAFAC class TrmE-Era-EngA-EngB-Septin-like GTPase superfamily. EngB GTPase family. The cofactor is Mg(2+).

In terms of biological role, necessary for normal cell division and for the maintenance of normal septation. The polypeptide is Probable GTP-binding protein EngB (Granulibacter bethesdensis (strain ATCC BAA-1260 / CGDNIH1)).